Consider the following 227-residue polypeptide: E3 ubiquitin-protein ligase ZNRF1 (227 aa).

The segment at 1-38 (MGGKQSTAARSRGPFPGVSTDDSAVPPPGGAPHFGHYR) is disordered. A lipid anchor (N-myristoyl glycine) is attached at glycine 2. Residues 2–10 (GGKQSTAAR) form a required for endosomal and lysosomal localization and myristoylation region. Residues serine 50, serine 52, and serine 53 each carry the phosphoserine modification. Positions 77 to 105 (RGAGDAERAPGSGGSASDSTYAHGNGYQE) are disordered. Phosphotyrosine is present on tyrosine 103. Serine 123 bears the Phosphoserine mark. The RING-type; atypical zinc-finger motif lies at 184–225 (CVICLEELLQGDTIARLPCLCIYHKSCIDSWFEVNRSCPEHP).

As to quaternary structure, interacts with AKT1, GLUL and TUBB2A. Interacts with ZNRF2. Interacts (via its RING domain) with UBE2N. Interacts (when phosphorylated) with YWHAE. Post-translationally, N-myristoylation targets ZNRF1 to intracellular membranes. In terms of processing, phosphorylated by SRC at Tyr-103; leading to 'Lys-63'-linked ubiquitination of TLR3, lysosomal trafficking and degradation.

It is found in the endosome. The protein localises to the lysosome. Its subcellular location is the membrane. It localises to the cytoplasmic vesicle. The protein resides in the secretory vesicle. It is found in the synaptic vesicle membrane. The catalysed reaction is S-ubiquitinyl-[E2 ubiquitin-conjugating enzyme]-L-cysteine + [acceptor protein]-L-lysine = [E2 ubiquitin-conjugating enzyme]-L-cysteine + N(6)-ubiquitinyl-[acceptor protein]-L-lysine.. It functions in the pathway protein modification; protein ubiquitination. In terms of biological role, E3 ubiquitin-protein ligase that plays a role in different processes including cell differentiation, receptor recycling or regulation of inflammation. Mediates the ubiquitination of AKT1 and GLUL, thereby playing a role in neuron cells differentiation. Plays a role in the establishment and maintenance of neuronal transmission and plasticity. Regulates Schwann cells differentiation by mediating ubiquitination of GLUL. Promotes neurodegeneration by mediating 'Lys-48'-linked polyubiquitination and subsequent degradation of AKT1 in axons: degradation of AKT1 prevents AKT1-mediated phosphorylation of GSK3B, leading to GSK3B activation and phosphorylation of DPYSL2/CRMP2 followed by destabilization of microtubule assembly in axons. Ubiquitinates the Na(+)/K(+) ATPase alpha-1 subunit/ATP1A1 and thereby influences its endocytosis and/or degradation. Controls ligand-induced EGFR signaling via mediating receptor ubiquitination and recruitment of the ESCRT machinery. Acts as a negative feedback mechanism controlling TLR3 trafficking by mediating TLR3 'Lys-63'-linked polyubiquitination to reduce type I IFN production. Modulates inflammation by promoting caveolin-1/CAV1 ubiquitination and degradation to regulate TLR4-activated immune response. The polypeptide is E3 ubiquitin-protein ligase ZNRF1 (ZNRF1) (Bos taurus (Bovine)).